The chain runs to 344 residues: MTQKLTITRPDDWHLHLRDGAALAAVLPDTARQFARAIIMPNLKPPVTTVDQASAYRARILAALPAGMAFEPLMTLYLTDNTPPEEIVAARASGFVHGVKLYPAGATTNSDAGVTDIRRCAATLEAMQREGVPLLVHGEVTDGDIDIFDREAVFIDRVMKPLRRDFPELKVVFEHITTRDAAQYVAEAEGPVGATITAHHLLYNRNAIFTGGIRPHYYCLPVLKREIHREALVKAATSGSPRFFLGTDSAPHARGLKEHACGCAGCYTALHAMELYAEAFDAAGALDKLEAFSSFNGPAFYGLPRNSGTLTLTREDWELPAELPYGDTTLVPLRAGETLRWKAS.

Zn(2+)-binding residues include H14 and H16. Residues 16–18 (HLR) and N42 each bind substrate. Zn(2+) is bound by residues K100, H137, and H175. At K100 the chain carries N6-carboxylysine. H137 serves as a coordination point for substrate. Substrate is bound at residue L220. A Zn(2+)-binding site is contributed by D248. The active site involves D248. Residues H252 and A264 each coordinate substrate.

It belongs to the metallo-dependent hydrolases superfamily. DHOase family. Class II DHOase subfamily. In terms of assembly, homodimer. Zn(2+) serves as cofactor.

The catalysed reaction is (S)-dihydroorotate + H2O = N-carbamoyl-L-aspartate + H(+). It functions in the pathway pyrimidine metabolism; UMP biosynthesis via de novo pathway; (S)-dihydroorotate from bicarbonate: step 3/3. Functionally, catalyzes the reversible cyclization of carbamoyl aspartate to dihydroorotate. This is Dihydroorotase from Cupriavidus metallidurans (strain ATCC 43123 / DSM 2839 / NBRC 102507 / CH34) (Ralstonia metallidurans).